The following is an 87-amino-acid chain: Candoxin (87 aa).

An N-terminal signal peptide occupies residues 1 to 21; it reads MKTLLLTLVVVTIVCLDLGYT. Intrachain disulfides connect Cys-24–Cys-47, Cys-27–Cys-32, Cys-40–Cys-64, Cys-68–Cys-80, and Cys-81–Cys-86.

As to expression, expressed by the venom gland.

It localises to the secreted. Functionally, binds and inhibits muscular and neuronal nicotinic acetylcholine receptors (nAChR). Is a reversible antagonist of muscle nAChR (alpha-1-beta-1-delta-epsilon/CHRNA1-CHRNB1-CHRND-CHRNE) (IC(50)=10 nM) and a potent and poorly reversible antagonist of the neuronal alpha-7/CHRNA7 nAChR (IC(50)=50 nM). May exhibit differential affinities for the two binding sites on the muscle nAChR. In Bungarus candidus (Malayan krait), this protein is Candoxin.